The chain runs to 277 residues: Antigen 1 (277 aa).

The signal sequence occupies residues 1-16 (MQLLALTLALCASIAA). N41, N71, N127, and N200 each carry an N-linked (GlcNAc...) asparagine glycan. The disordered stretch occupies residues 230–277 (CVGGEEENDGQGEEQTEEPAQDDQQDEAAEEEIPENCHTHEGGELHCT). A compositionally biased stretch (acidic residues) spans 233–263 (GEEENDGQGEEQTEEPAQDDQQDEAAEEEIP). Positions 264 to 277 (ENCHTHEGGELHCT) are enriched in basic and acidic residues.

Belongs to the ZPS1 family.

This is Antigen 1 (aspnd1) from Emericella nidulans (strain FGSC A4 / ATCC 38163 / CBS 112.46 / NRRL 194 / M139) (Aspergillus nidulans).